A 148-amino-acid polypeptide reads, in one-letter code: Calmodulin (148 aa).

A2 bears the N-acetylalanine mark. 4 EF-hand domains span residues D8–N43, P44–D79, D81–K116, and K116–K148. D21, D23, D25, C27, E32, D57, D59, N61, T63, E68, D94, D96, N98, and E105 together coordinate Ca(2+). Residue K116 is modified to N6,N6,N6-trimethyllysine. Ca(2+) contacts are provided by D129, D131, D133, Q135, and E140.

It belongs to the calmodulin family.

Its function is as follows. Calmodulin mediates the control of a large number of enzymes, ion channels and other proteins by Ca(2+). Among the enzymes to be stimulated by the calmodulin-Ca(2+) complex are a number of protein kinases and phosphatases. This chain is Calmodulin (CAMF1), found in Fagus sylvatica (Beechnut).